The chain runs to 953 residues: Translation initiation factor IF-2 (953 aa).

The tract at residues 55–340 (GVTTEAPAAS…KSKRQKRNEY (286 aa)) is disordered. The segment covering 81–93 (KPAATPQQAAKPA) has biased composition (low complexity). Pro residues predominate over residues 110–119 (PKPAAKPVPK). Composition is skewed to low complexity over residues 123–133 (SAAKAESSAPK) and 143–160 (KPAA…MPRP). A compositionally biased stretch (gly residues) spans 202-219 (PGGGPRPGGNRPQGGQGG). A compositionally biased stretch (low complexity) spans 233 to 248 (QPRPQGGSRSQQSGGQ). Over residues 280–323 (NGRGGAGGQGGRPGFGGGRPGGGGSAGGRGGRRGGTAGAFGRPG) the composition is skewed to gly residues. Residues 327–336 (RKGRKSKRQK) show a composition bias toward basic residues. The tr-type G domain maps to 449-621 (KRPPVVTVMG…VLLTADASLD (173 aa)). Positions 458–465 (GHVDHGKT) are G1. A GTP-binding site is contributed by 458–465 (GHVDHGKT). Positions 483–487 (GITQG) are G2. Positions 508-511 (DTPG) are G3. Residues 508–512 (DTPGH) and 562–565 (NKID) contribute to the GTP site. The tract at residues 562-565 (NKID) is G4. The segment at 598 to 600 (SAK) is G5.

It belongs to the TRAFAC class translation factor GTPase superfamily. Classic translation factor GTPase family. IF-2 subfamily.

Its subcellular location is the cytoplasm. In terms of biological role, one of the essential components for the initiation of protein synthesis. Protects formylmethionyl-tRNA from spontaneous hydrolysis and promotes its binding to the 30S ribosomal subunits. Also involved in the hydrolysis of GTP during the formation of the 70S ribosomal complex. In Corynebacterium diphtheriae (strain ATCC 700971 / NCTC 13129 / Biotype gravis), this protein is Translation initiation factor IF-2.